We begin with the raw amino-acid sequence, 377 residues long: Opsin-2 (377 aa).

Topologically, residues 1–57 (MNNQSENYYHGAQFEALKSAGAIEMLGDGLTGDDLAAIPEHWLSYPAPPASAHTALA) are extracellular. An N-linked (GlcNAc...) asparagine glycan is attached at N3. A helical transmembrane segment spans residues 58–78 (LLYIFFTFAALVGNGMVIFIF). Topologically, residues 79 to 89 (STTKSLRTSSN) are cytoplasmic. The chain crosses the membrane as a helical span at residues 90–110 (FLVLNLAILDFIMMAKAPIFI). Topologically, residues 111–126 (YNSAMRGFAVGTVGCQ) are extracellular. A disulfide bond links C125 and C202. The helical transmembrane segment at 127 to 146 (IFALMGAYSGIGAGMTNACI) threads the bilayer. Topologically, residues 147–166 (AYDRHSTITRPLDGRLSEGK) are cytoplasmic. Residues 167–187 (VLLMVAFVWIYSTPWALLPLL) traverse the membrane as a helical segment. The Extracellular portion of the chain corresponds to 188-214 (KIWGRYVPEGYLTSCSFDYLTNTFDTK). The helical transmembrane segment at 215 to 235 (LFVACIFTCSYVFPMSLIIYF) threads the bilayer. Topologically, residues 236-283 (YSGIVKQVFAHEAALREQAKKMNVESLRANQGGSSESAEIRIAKAALT) are cytoplasmic. The helical transmembrane segment at 284–304 (VCFLFVASWTPYGVMALIGAF) threads the bilayer. At 305 to 314 (GNQQLLTPGV) the chain is on the extracellular side. Residues 315–335 (TMIPAVACKAVACISPWVYAI) form a helical membrane-spanning segment. The Cytoplasmic portion of the chain corresponds to 336–377 (RHPMYRQELQRRMPWLQIDEPDDTVSTATSNTTNSAPPAATA). The interval 355-377 (EPDDTVSTATSNTTNSAPPAATA) is disordered. A compositionally biased stretch (low complexity) spans 361 to 377 (STATSNTTNSAPPAATA).

This sequence belongs to the G-protein coupled receptor 1 family. Opsin subfamily. In the retina, expression is essentially uniformly distributed, but a higher level is seen in the dorsal region of the retina and in the dorsal rim retinulae.

It localises to the membrane. Its function is as follows. Visual pigments are the light-absorbing molecules that mediate vision. They consist of an apoprotein, opsin, covalently linked to cis-retinal. May play a role in photoperiodic photoreception. The chain is Opsin-2 (OP2) from Manduca sexta (Tobacco hawkmoth).